The sequence spans 81 residues: Large ribosomal subunit protein bL31B (81 aa).

It belongs to the bacterial ribosomal protein bL31 family. Type B subfamily. As to quaternary structure, part of the 50S ribosomal subunit.

The sequence is that of Large ribosomal subunit protein bL31B from Halalkalibacterium halodurans (strain ATCC BAA-125 / DSM 18197 / FERM 7344 / JCM 9153 / C-125) (Bacillus halodurans).